Reading from the N-terminus, the 165-residue chain is Nucleotide-binding protein P9515_05441 (165 aa).

The protein belongs to the YajQ family.

In terms of biological role, nucleotide-binding protein. This is Nucleotide-binding protein P9515_05441 from Prochlorococcus marinus (strain MIT 9515).